A 331-amino-acid polypeptide reads, in one-letter code: Aspartate carbamoyltransferase catalytic subunit (331 aa).

Arg76 and Thr77 together coordinate carbamoyl phosphate. Residue Lys104 coordinates L-aspartate. Positions 126, 154, and 157 each coordinate carbamoyl phosphate. 2 residues coordinate L-aspartate: Arg187 and Arg246. Gly287 and Pro288 together coordinate carbamoyl phosphate.

The protein belongs to the aspartate/ornithine carbamoyltransferase superfamily. ATCase family. Heterododecamer (2C3:3R2) of six catalytic PyrB chains organized as two trimers (C3), and six regulatory PyrI chains organized as three dimers (R2).

The catalysed reaction is carbamoyl phosphate + L-aspartate = N-carbamoyl-L-aspartate + phosphate + H(+). It participates in pyrimidine metabolism; UMP biosynthesis via de novo pathway; (S)-dihydroorotate from bicarbonate: step 2/3. Its function is as follows. Catalyzes the condensation of carbamoyl phosphate and aspartate to form carbamoyl aspartate and inorganic phosphate, the committed step in the de novo pyrimidine nucleotide biosynthesis pathway. This chain is Aspartate carbamoyltransferase catalytic subunit, found in Dehalococcoides mccartyi (strain CBDB1).